A 317-amino-acid polypeptide reads, in one-letter code: tRNA(Met) cytidine acetate ligase (317 aa).

ATP is bound by residues I6–Q19, G100, N157, and R182.

The protein belongs to the TmcAL family.

The protein localises to the cytoplasm. The catalysed reaction is cytidine(34) in elongator tRNA(Met) + acetate + ATP = N(4)-acetylcytidine(34) in elongator tRNA(Met) + AMP + diphosphate. Functionally, catalyzes the formation of N(4)-acetylcytidine (ac(4)C) at the wobble position of elongator tRNA(Met), using acetate and ATP as substrates. First activates an acetate ion to form acetyladenylate (Ac-AMP) and then transfers the acetyl group to tRNA to form ac(4)C34. The protein is tRNA(Met) cytidine acetate ligase of Mesomycoplasma hyopneumoniae (strain J / ATCC 25934 / NCTC 10110) (Mycoplasma hyopneumoniae).